A 577-amino-acid chain; its full sequence is Gamma-tubulin complex component gfh1 (577 aa).

This sequence belongs to the TUBGCP family.

It is found in the cytoplasm. Its subcellular location is the cytoskeleton. It localises to the microtubule organizing center. The protein resides in the spindle pole body. Required for proper anchoring of astral microtubules at the spindle pole bodies (SPBs), during anaphase, ensuring correct cell polarity. This chain is Gamma-tubulin complex component gfh1 (gfh1), found in Schizosaccharomyces pombe (strain 972 / ATCC 24843) (Fission yeast).